A 353-amino-acid chain; its full sequence is Glutamine synthetase nodule isozyme (353 aa).

The 81-residue stretch at 19 to 99 (IIAEYIWVGG…VMCDTYTPAG (81 aa)) folds into the GS beta-grasp domain. Residues 106–353 (KRHAAAKIFS…TSMIAETTLL (248 aa)) enclose the GS catalytic domain.

It belongs to the glutamine synthetase family. Homooctamer.

Its subcellular location is the cytoplasm. It carries out the reaction L-glutamate + NH4(+) + ATP = L-glutamine + ADP + phosphate + H(+). This Lupinus luteus (European yellow lupine) protein is Glutamine synthetase nodule isozyme.